Reading from the N-terminus, the 77-residue chain is U8-lycotoxin-Ls1m (77 aa).

An N-terminal signal peptide occupies residues 1–20 (MKLMIFTGLVLFAIVSLIEA). A propeptide spanning residues 21 to 26 (QAENEK) is cleaved from the precursor.

Belongs to the neurotoxin 19 (CSTX) family. 08 (U8-Lctx) subfamily. In terms of processing, contains 4 disulfide bonds. Expressed by the venom gland.

It localises to the secreted. The polypeptide is U8-lycotoxin-Ls1m (Lycosa singoriensis (Wolf spider)).